A 623-amino-acid chain; its full sequence is Dictomallein-5 (623 aa).

An N-terminal signal peptide occupies residues 1-21; that stretch reads MKIFIIKIILVLFNYVLLSYS. Residues 174–435 form the Peptidase M66 domain; that stretch reads PNVGQDYTLK…QNYFKNSIYY (262 aa). His-327 lines the Zn(2+) pocket. The active site involves Glu-328. 2 residues coordinate Zn(2+): His-331 and His-337.

It belongs to the dictomallein family. Requires Zn(2+) as cofactor.

The protein localises to the secreted. In Dictyostelium discoideum (Social amoeba), this protein is Dictomallein-5 (dtmlE).